Here is a 335-residue protein sequence, read N- to C-terminus: Beta-ketoacyl-[acyl-carrier-protein] synthase III (335 aa).

Catalysis depends on residues Cys-116 and His-256. The interval 257-261 (QANLR) is ACP-binding. The active site involves Asn-286.

Belongs to the thiolase-like superfamily. FabH family. Homodimer.

Its subcellular location is the cytoplasm. The catalysed reaction is malonyl-[ACP] + acetyl-CoA + H(+) = 3-oxobutanoyl-[ACP] + CO2 + CoA. The protein operates within lipid metabolism; fatty acid biosynthesis. Its function is as follows. Catalyzes the condensation reaction of fatty acid synthesis by the addition to an acyl acceptor of two carbons from malonyl-ACP. Catalyzes the first condensation reaction which initiates fatty acid synthesis and may therefore play a role in governing the total rate of fatty acid production. Possesses both acetoacetyl-ACP synthase and acetyl transacylase activities. Its substrate specificity determines the biosynthesis of branched-chain and/or straight-chain of fatty acids. In Porphyromonas gingivalis (strain ATCC 33277 / DSM 20709 / CIP 103683 / JCM 12257 / NCTC 11834 / 2561), this protein is Beta-ketoacyl-[acyl-carrier-protein] synthase III.